Here is a 317-residue protein sequence, read N- to C-terminus: Transaldolase (317 aa).

Lysine 132 functions as the Schiff-base intermediate with substrate in the catalytic mechanism.

The protein belongs to the transaldolase family. Type 1 subfamily. Homodimer.

Its subcellular location is the cytoplasm. The enzyme catalyses D-sedoheptulose 7-phosphate + D-glyceraldehyde 3-phosphate = D-erythrose 4-phosphate + beta-D-fructose 6-phosphate. Its pathway is carbohydrate degradation; pentose phosphate pathway; D-glyceraldehyde 3-phosphate and beta-D-fructose 6-phosphate from D-ribose 5-phosphate and D-xylulose 5-phosphate (non-oxidative stage): step 2/3. In terms of biological role, transaldolase is important for the balance of metabolites in the pentose-phosphate pathway. The sequence is that of Transaldolase from Shewanella denitrificans (strain OS217 / ATCC BAA-1090 / DSM 15013).